Consider the following 751-residue polypeptide: Oxysterol-binding protein-related protein 11 (751 aa).

Met1 bears the N-acetylmethionine mark. The tract at residues 1-57 (MQGGEPASVMKVSESEGKLEGLATAVTPNKNSGNSSCGGAISSSSSNSSRGGSAKGW) is disordered. A Phosphoserine modification is found at Ser15. Thr27 is modified (phosphothreonine). The segment covering 31-52 (NSGNSSCGGAISSSSSNSSRGG) has biased composition (low complexity). The region spanning 63–160 (MESVNGYLMK…WVSRLQICTQ (98 aa)) is the PH domain. Ser177, Ser179, Ser182, Ser186, Ser189, and Ser194 each carry phosphoserine. Disordered stretches follow at residues 475–497 (SGVS…EEAP) and 694–716 (EIDK…ERLR).

The protein belongs to the OSBP family. As to quaternary structure, heterodimer with OSBPL9.

It is found in the late endosome membrane. The protein localises to the golgi apparatus. The protein resides in the trans-Golgi network membrane. The catalysed reaction is a 1,2-diacyl-sn-glycero-3-phospho-(1D-myo-inositol 4-phosphate)(out) + a 1,2-diacyl-sn-glycero-3-phospho-L-serine(in) = a 1,2-diacyl-sn-glycero-3-phospho-(1D-myo-inositol 4-phosphate)(in) + a 1,2-diacyl-sn-glycero-3-phospho-L-serine(out). In terms of biological role, plays a role in regulating ADIPOQ and FABP4 levels in differentiating adipocytes and is also involved in regulation of adipocyte triglyceride storage. Weakly binds 25-hydroxycholesterol. Interacts with OSBPL9 to function as lipid transfer proteins. Together they form a heterodimer that localizes at the ER-trans-Golgi membrane contact sites, and exchanges phosphatidylserine (1,2-diacyl-sn-glycero-3-phospho-L-serine, PS) for phosphatidylinositol-4-phosphate (1,2-diacyl-sn-glycero-3-phospho-(1D-myo-inositol 4-phosphate), PI(4)P) between the two organelles, a step that is critical for sphingomyelin synthesis in the Golgi complex. This Mus musculus (Mouse) protein is Oxysterol-binding protein-related protein 11 (Osbpl11).